The primary structure comprises 398 residues: 1,4-beta-D-glucan cellobiohydrolase CEL6C (398 aa).

The first 18 residues, 1–18 (MKITSSAAALALVASAVA), serve as a signal peptide directing secretion. Asn70 is a glycosylation site (N-linked (GlcNAc...) asparagine). Asp125 is a catalytic residue. Residue Asp170 is the Proton donor of the active site. The substrate site is built by Trp218, Trp318, Lys346, and Glu350.

It belongs to the glycosyl hydrolase 6 (cellulase B) family. Both N- and O-glycosylated.

Its subcellular location is the secreted. It catalyses the reaction Hydrolysis of (1-&gt;4)-beta-D-glucosidic linkages in cellulose and cellotetraose, releasing cellobiose from the non-reducing ends of the chains.. Exoglucanase that plays an important function in biomass degradation by catalyzing the hydrolysis of the non-reducing end beta-1,4-glucosidic linkages in cellulose and cellotetraose to release cellobiose. Hydrolyzes crystalline and amorphous cellulose but is inactive on hydroxyethyl cellulose, mannan, galactomannan, xyloglucan, arabinoxylan, arabinan, xylan, and pectin. In Podospora anserina (strain S / ATCC MYA-4624 / DSM 980 / FGSC 10383) (Pleurage anserina), this protein is 1,4-beta-D-glucan cellobiohydrolase CEL6C.